The sequence spans 517 residues: MLDLTKLIDGILKGSAQGVPAHAVGEQAIAAIGLDSSSLPTSDAIFAAVPGTRTHGAQFAGTDNAAKAVAILTDAAGLEVLNEAGETRPVIVVDDVRAVLGAASSSIYGDPSKDFTLIGVTGTSGKTTTSYLLEKGLMEAGHKVGLIGTTGTRIDGEEVPTKLTTPEAPTLQALFARMRDHGVTHVVMEVSSHALSLGRVAGSHFDVAAFTNLSQDHLDFHPTMDDYFDAKALFFRADSPLVADKQVVCVDDSWGQRMASVAADVQTVSTLGQEADFSATDINVSDSGAQSFKINAPSNQSYQVELALPGAFNVANATLAFAAAARVGVDGEAFARGMSKVAVPGRMERIDEGQDFLAVVDYAHKPAAVAAVLDTLRTQIDGRLGVVIGAGGDRDSTKRGPMGQLSAQRADLVIVTDDNPRSEVPATIRAAVTAGAQQGASESERPVEVLEIGDRAEAIRVLVEWAQPGDGIVVAGKGHEVGQLVAGVTHHFDDREEVRAALTEKLNNKLPLTTEEG.

2 residues coordinate UDP-N-acetyl-alpha-D-muramoyl-L-alanyl-D-glutamate: L34 and S36. Residue 122–128 (GTSGKTT) participates in ATP binding. Residues 164–165 (TT), S191, and R199 each bind UDP-N-acetyl-alpha-D-muramoyl-L-alanyl-D-glutamate. The residue at position 231 (K231) is an N6-carboxylysine. Meso-2,6-diaminopimelate is bound by residues R394, 418–421 (DNPR), G476, and E480. A Meso-diaminopimelate recognition motif motif is present at residues 418–421 (DNPR).

This sequence belongs to the MurCDEF family. MurE subfamily. It depends on Mg(2+) as a cofactor. Carboxylation is probably crucial for Mg(2+) binding and, consequently, for the gamma-phosphate positioning of ATP.

Its subcellular location is the cytoplasm. It catalyses the reaction UDP-N-acetyl-alpha-D-muramoyl-L-alanyl-D-glutamate + meso-2,6-diaminopimelate + ATP = UDP-N-acetyl-alpha-D-muramoyl-L-alanyl-gamma-D-glutamyl-meso-2,6-diaminopimelate + ADP + phosphate + H(+). It functions in the pathway cell wall biogenesis; peptidoglycan biosynthesis. Its function is as follows. Catalyzes the addition of meso-diaminopimelic acid to the nucleotide precursor UDP-N-acetylmuramoyl-L-alanyl-D-glutamate (UMAG) in the biosynthesis of bacterial cell-wall peptidoglycan. The chain is UDP-N-acetylmuramoyl-L-alanyl-D-glutamate--2,6-diaminopimelate ligase from Corynebacterium glutamicum (strain ATCC 13032 / DSM 20300 / JCM 1318 / BCRC 11384 / CCUG 27702 / LMG 3730 / NBRC 12168 / NCIMB 10025 / NRRL B-2784 / 534).